A 389-amino-acid chain; its full sequence is Chalcone synthase H2 (389 aa).

Cys-164 is an active-site residue.

The protein belongs to the thiolase-like superfamily. Chalcone/stilbene synthases family.

The protein localises to the cytoplasm. The catalysed reaction is (E)-4-coumaroyl-CoA + 3 malonyl-CoA + 3 H(+) = 2',4,4',6'-tetrahydroxychalcone + 3 CO2 + 4 CoA. It functions in the pathway secondary metabolite biosynthesis; flavonoid biosynthesis. Functionally, involved in the biosynthesis of prenylated phenolics natural products which contribute to the bitter taste of beer and display broad biological activities. Chalcone synthase that can use 4-coumaroyl-CoA to produce 4,2',4',6'-tetrahydroxychalcone (also termed naringenin-chalcone or chalcone) which can, under specific conditions, spontaneously isomerize into naringenin. The chain is Chalcone synthase H2 from Humulus lupulus (European hop).